A 260-amino-acid polypeptide reads, in one-letter code: F-actin-capping protein subunit beta (260 aa).

The protein belongs to the F-actin-capping protein beta subunit family. In terms of assembly, component of the F-actin capping complex, composed of a heterodimer of an alpha and a beta subunit.

It is found in the cytoplasm. The protein resides in the cytoskeleton. The protein localises to the actin patch. F-actin-capping proteins bind in a Ca(2+)-independent manner to the fast growing ends of actin filaments (barbed end) thereby blocking the exchange of subunits at these ends. Unlike other capping proteins (such as gelsolin and severin), these proteins do not sever actin filaments. The chain is F-actin-capping protein subunit beta (CAP2) from Yarrowia lipolytica (strain CLIB 122 / E 150) (Yeast).